A 726-amino-acid polypeptide reads, in one-letter code: Probable dipeptidyl-peptidase 5 (726 aa).

Residues 1-19 (MGALQWLSITAAAASAVSA) form the signal peptide. Asn97, Asn153, Asn259, Asn398, Asn453, and Asn529 each carry an N-linked (GlcNAc...) asparagine glycan. Ser564 serves as the catalytic Charge relay system. Asn611 carries an N-linked (GlcNAc...) asparagine glycan. Active-site charge relay system residues include Asp647 and His679.

The protein belongs to the peptidase S9C family.

The protein localises to the secreted. Extracellular dipeptidyl-peptidase which removes N-terminal dipeptides sequentially from polypeptides having unsubstituted N-termini. In Aspergillus niger, this protein is Probable dipeptidyl-peptidase 5 (dpp5).